The primary structure comprises 426 residues: Protein trichome birefringence-like 19 (426 aa).

The chain crosses the membrane as a helical; Signal-anchor for type II membrane protein span at residues L15–L35. The GDS motif signature appears at G142–S144. The DCXHWCLPGXXDXWN motif motif lies at D388–N402.

The protein belongs to the PC-esterase family. TBL subfamily.

Its subcellular location is the membrane. Functionally, may act as a bridging protein that binds pectin and other cell wall polysaccharides. Probably involved in maintaining esterification of pectins. May be involved in the specific O-acetylation of cell wall polymers. The polypeptide is Protein trichome birefringence-like 19 (TBL19) (Arabidopsis thaliana (Mouse-ear cress)).